The following is a 211-amino-acid chain: Ribosomal RNA large subunit methyltransferase E (211 aa).

The S-adenosyl-L-methionine site is built by Gly-60, Trp-62, Asp-85, Asp-101, and Asp-126. Residue Lys-166 is the Proton acceptor of the active site.

Belongs to the class I-like SAM-binding methyltransferase superfamily. RNA methyltransferase RlmE family.

It localises to the cytoplasm. The catalysed reaction is uridine(2552) in 23S rRNA + S-adenosyl-L-methionine = 2'-O-methyluridine(2552) in 23S rRNA + S-adenosyl-L-homocysteine + H(+). Specifically methylates the uridine in position 2552 of 23S rRNA at the 2'-O position of the ribose in the fully assembled 50S ribosomal subunit. The sequence is that of Ribosomal RNA large subunit methyltransferase E from Bordetella petrii (strain ATCC BAA-461 / DSM 12804 / CCUG 43448).